The following is a 141-amino-acid chain: MAKKVIRVIKLQIPAGKANPAPPVGPALGQAGVNIMGFCKEFNARTESEVGMIIPVEITVFEDRSFTFITKTPPAAVLLKKAAGIESGSGVPNKTKVATLKRDKVREIAELKRPDLNAASVEAAMRMVEGTARSMGIVIED.

The protein belongs to the universal ribosomal protein uL11 family. Part of the ribosomal stalk of the 50S ribosomal subunit. Interacts with L10 and the large rRNA to form the base of the stalk. L10 forms an elongated spine to which L12 dimers bind in a sequential fashion forming a multimeric L10(L12)X complex. One or more lysine residues are methylated.

Forms part of the ribosomal stalk which helps the ribosome interact with GTP-bound translation factors. The sequence is that of Large ribosomal subunit protein uL11 from Brevibacillus brevis (strain 47 / JCM 6285 / NBRC 100599).